Consider the following 243-residue polypeptide: Phosphoadenosine 5'-phosphosulfate reductase (243 aa).

Cysteine 239 functions as the Nucleophile; cysteine thiosulfonate intermediate in the catalytic mechanism.

It belongs to the PAPS reductase family. CysH subfamily.

It is found in the cytoplasm. It catalyses the reaction [thioredoxin]-disulfide + sulfite + adenosine 3',5'-bisphosphate + 2 H(+) = [thioredoxin]-dithiol + 3'-phosphoadenylyl sulfate. It participates in sulfur metabolism; hydrogen sulfide biosynthesis; sulfite from sulfate: step 3/3. Functionally, catalyzes the formation of sulfite from phosphoadenosine 5'-phosphosulfate (PAPS) using thioredoxin as an electron donor. This Erwinia tasmaniensis (strain DSM 17950 / CFBP 7177 / CIP 109463 / NCPPB 4357 / Et1/99) protein is Phosphoadenosine 5'-phosphosulfate reductase.